The following is a 298-amino-acid chain: Small ribosomal subunit protein uS2 (298 aa).

Composition is skewed to basic and acidic residues over residues 237–259 and 280–298; these read QSKELDDKADEKAAKVSHSDGQK and PKSEKQDNVDAAKLPENKG. Residues 237 to 298 form a disordered region; the sequence is QSKELDDKAD…DAAKLPENKG (62 aa).

This sequence belongs to the universal ribosomal protein uS2 family.

This is Small ribosomal subunit protein uS2 from Neorickettsia sennetsu (strain ATCC VR-367 / Miyayama) (Ehrlichia sennetsu).